The following is a 119-amino-acid chain: Large ribosomal subunit protein bL20 (119 aa).

It belongs to the bacterial ribosomal protein bL20 family.

In terms of biological role, binds directly to 23S ribosomal RNA and is necessary for the in vitro assembly process of the 50S ribosomal subunit. It is not involved in the protein synthesizing functions of that subunit. In Streptococcus gordonii (strain Challis / ATCC 35105 / BCRC 15272 / CH1 / DL1 / V288), this protein is Large ribosomal subunit protein bL20.